A 416-amino-acid polypeptide reads, in one-letter code: Tyrosine--tRNA ligase (416 aa).

An L-tyrosine-binding site is contributed by tyrosine 40. Positions 45 to 54 (ATAASLHVGH) match the 'HIGH' region motif. Residues tyrosine 177 and glutamine 181 each coordinate L-tyrosine. A 'KMSKS' region motif is present at residues 237-241 (KMGKS). Lysine 240 is an ATP binding site. The region spanning 351-416 (LSVAHFLVAA…RKKHKLVRLS (66 aa)) is the S4 RNA-binding domain.

The protein belongs to the class-I aminoacyl-tRNA synthetase family. TyrS type 1 subfamily. As to quaternary structure, homodimer.

It is found in the cytoplasm. It catalyses the reaction tRNA(Tyr) + L-tyrosine + ATP = L-tyrosyl-tRNA(Tyr) + AMP + diphosphate + H(+). Its function is as follows. Catalyzes the attachment of tyrosine to tRNA(Tyr) in a two-step reaction: tyrosine is first activated by ATP to form Tyr-AMP and then transferred to the acceptor end of tRNA(Tyr). This chain is Tyrosine--tRNA ligase, found in Cereibacter sphaeroides (strain KD131 / KCTC 12085) (Rhodobacter sphaeroides).